Consider the following 271-residue polypeptide: Putative pirin-like protein At3g59260 (271 aa).

The protein belongs to the pirin family.

The protein localises to the nucleus. This is Putative pirin-like protein At3g59260 from Arabidopsis thaliana (Mouse-ear cress).